Reading from the N-terminus, the 776-residue chain is Calcium-independent phospholipase A2-gamma (776 aa).

Asn4 and Asn157 each carry an N-linked (GlcNAc...) asparagine glycan. 2 disordered regions span residues 216-276 and 306-334; these read KGKM…HPVS and KLKS…DKKA. Composition is skewed to basic and acidic residues over residues 221–239 and 247–263; these read QTKE…ERKS and VADR…KDKL. One can recognise a PNPLA domain in the interval 439–634; sequence LTIDGGGTRG…LLNNPSALAL (196 aa). Residues 443 to 448 carry the GXGXXG motif; the sequence is GGGTRG. A helical membrane pass occupies residues 469 to 489; sequence LFDYICGVSTGAILAFMLGLF. Residues 475–479 carry the GXSXG motif; sequence GVSTG. The active-site Nucleophile is the Ser477. Asp621 functions as the Proton acceptor in the catalytic mechanism. Residues 621–623 carry the DGA/G motif; the sequence is DGG. Lys730 carries the post-translational modification N6-succinyllysine.

Expressed in myocardium (at protein level).

It is found in the endoplasmic reticulum membrane. The protein localises to the mitochondrion membrane. It localises to the peroxisome membrane. It catalyses the reaction a 1,2-diacyl-sn-glycero-3-phosphocholine + H2O = a 1-acyl-sn-glycero-3-phosphocholine + a fatty acid + H(+). It carries out the reaction a 1,2-diacyl-sn-glycero-3-phosphocholine + H2O = a 2-acyl-sn-glycero-3-phosphocholine + a fatty acid + H(+). The catalysed reaction is a 1,2-diacyl-sn-glycero-3-phosphoethanolamine + H2O = a 1-acyl-sn-glycero-3-phosphoethanolamine + a fatty acid + H(+). The enzyme catalyses a 1-O-(1Z-alkenyl)-2-acyl-sn-glycero-3-phosphocholine + H2O = a 1-O-(1Z-alkenyl)-sn-glycero-3-phosphocholine + a fatty acid + H(+). It catalyses the reaction a 1-acyl-sn-glycero-3-phosphocholine + H2O = sn-glycerol 3-phosphocholine + a fatty acid + H(+). It carries out the reaction 1-hexadecanoyl-2-(5Z,8Z,11Z,14Z-eicosatetraenoyl)-sn-glycero-3-phosphocholine + H2O = 2-(5Z,8Z,11Z,14Z)-eicosatetraenoyl-sn-glycero-3-phosphocholine + hexadecanoate + H(+). The catalysed reaction is 1-acyl-2-(9Z,12Z)-octadecadienoyl-sn-glycero-3-phosphocholine + H2O = a 1-acyl-sn-glycero-3-phosphocholine + (9Z,12Z)-octadecadienoate + H(+). The enzyme catalyses 1-acyl-2-(5Z,8Z,11Z,14Z-eicosatetraenoyl)-sn-glycero-3-phosphocholine + H2O = a 1-acyl-sn-glycero-3-phosphocholine + (5Z,8Z,11Z,14Z)-eicosatetraenoate + H(+). It catalyses the reaction 1-hexadecanoyl-2-(5Z,8Z,11Z,14Z-eicosatetraenoyl)-sn-glycero-3-phosphocholine + H2O = 1-hexadecanoyl-sn-glycero-3-phosphocholine + (5Z,8Z,11Z,14Z)-eicosatetraenoate + H(+). It carries out the reaction 1-octadecanoyl-2-(9Z-octadecenoyl)-sn-glycero-3-phosphocholine + H2O = 1-octadecanoyl-sn-glycero-3-phosphocholine + (9Z)-octadecenoate + H(+). The catalysed reaction is 1-hexadecanoyl-2-(9Z-octadecenoyl)-sn-glycero-3-phosphocholine + H2O = 1-hexadecanoyl-sn-glycero-3-phosphocholine + (9Z)-octadecenoate + H(+). The enzyme catalyses 1-hexadecanoyl-2-(9Z,12Z-octadecadienoyl)-sn-glycero-3-phosphocholine + H2O = (9Z,12Z)-octadecadienoate + 1-hexadecanoyl-sn-glycero-3-phosphocholine + H(+). It catalyses the reaction 1-acyl-2-(9Z,12Z)-octadecadienoyl-sn-glycero-3-phosphoethanolamine + H2O = a 1-acyl-sn-glycero-3-phosphoethanolamine + (9Z,12Z)-octadecadienoate + H(+). It carries out the reaction 1-acyl-2-(5Z,8Z,11Z,14Z)-eicosatetraenoyl-sn-glycero-3-phosphoethanolamine + H2O = a 1-acyl-sn-glycero-3-phosphoethanolamine + (5Z,8Z,11Z,14Z)-eicosatetraenoate + H(+). The catalysed reaction is 1-hexadecanoyl-2-(5Z,8Z,11Z,14Z-eicosatetraenoyl)-sn-glycero-3-phosphoethanolamine + H2O = 1-hexadecanoyl-sn-glycero-3-phosphoethanolamine + (5Z,8Z,11Z,14Z)-eicosatetraenoate + H(+). The enzyme catalyses 1-octadecanoyl-2-(9Z-octadecenoyl)-sn-glycero-3-phosphocholine + H2O = 2-(9Z-octadecenoyl)-sn-glycero-3-phosphocholine + octadecanoate + H(+). It catalyses the reaction 1-hexadecanoyl-2-(4Z,7Z,10Z,13Z,16Z,19Z-docosahexaenoyl)-sn-glycero-3-phosphocholine + H2O = 2-(4Z,7Z,10Z,13Z,16Z,19Z-docosahexaenoyl)-sn-glycero-3-phosphocholine + hexadecanoate + H(+). It carries out the reaction 1-O-(1Z)-hexadecenyl-2 (5Z,8Z,11Z,14Z)-eicosatetraenoyl-sn-glycero-3-phosphocholine + H2O = 1-(1Z-hexadecenyl)-sn-glycero-3-phosphocholine + (5Z,8Z,11Z,14Z)-eicosatetraenoate + H(+). The catalysed reaction is 1-O-(1Z-hexadecenyl)-2-(9Z-octadecenoyl)-sn-glycero-3-phosphocholine + H2O = 1-(1Z-hexadecenyl)-sn-glycero-3-phosphocholine + (9Z)-octadecenoate + H(+). The enzyme catalyses 1-hexadecanoyl-sn-glycero-3-phosphocholine + H2O = sn-glycerol 3-phosphocholine + hexadecanoate + H(+). It catalyses the reaction 1',3'-bis-[1,2-di-(9Z,12Z-octadecadienoyl)-sn-glycero-3-phospho]-glycerol + H2O = 1'-[1,2-di-(9Z,12Z-octadecadienoyl)-sn-glycero-3-phospho]-3'-[1-(9Z,12Z-octadecadienoyl)-sn-glycero-3-phospho]-glycerol + (9Z,12Z)-octadecadienoate + H(+). It carries out the reaction 1'-[1-acyl-2-(9-hydroxy-(10E,12Z)-octadecadienoyl)-sn-glycero-3-phospho]-3'-[1,2-diacyl-sn-glycero-3-phospho]-glycerol + H2O = 9-hydroxy-(10E,12Z)-octadecadienoate + 1'-[1,2-diacyl-sn-glycero-3-phospho],3'-[1-acyl-sn-glycero-3-phospho]-glycerol + H(+). Its pathway is phospholipid metabolism. With respect to regulation, calcium-independent phospholipase. Calcium-independent and membrane-bound phospholipase, that catalyzes the esterolytic cleavage of fatty acids from glycerophospholipids to yield free fatty acids and lysophospholipids, hence regulating membrane physical properties and the release of lipid second messengers and growth factors. Hydrolyzes phosphatidylethanolamine, phosphatidylcholine and probably phosphatidylinositol with a possible preference for the former. Also has a broad substrate specificity in terms of fatty acid moieties, hydrolyzing saturated and mono-unsaturated fatty acids at nearly equal rates from either the sn-1 or sn-2 position in diacyl phosphatidylcholine. However, has a weak activity toward polyunsaturated fatty acids at the sn-2 position, and thereby favors the production of 2-arachidonoyl lysophosphatidylcholine, a key branch point metabolite in eicosanoid signaling. On the other hand, can produce arachidonic acid from the sn-1 position of diacyl phospholipid and from the sn-2 position of arachidonate-containing plasmalogen substrates. Therefore, plays an important role in the mobilization of arachidonic acid in response to cellular stimuli and the generation of lipid second messengers. Can also hydrolyze lysophosphatidylcholine. In the mitochondrial compartment, catalyzes the hydrolysis and release of oxidized aliphatic chains from cardiolipin and integrates mitochondrial bioenergetics and signaling. It is essential for maintaining efficient bioenergetic mitochondrial function through tailoring mitochondrial membrane lipid metabolism and composition. In Mus musculus (Mouse), this protein is Calcium-independent phospholipase A2-gamma.